A 448-amino-acid polypeptide reads, in one-letter code: tRNA-2-methylthio-N(6)-dimethylallyladenosine synthase (448 aa).

Residues 3-119 (GRVYVKTHGC…LPEMIDRARD (117 aa)) enclose the MTTase N-terminal domain. 6 residues coordinate [4Fe-4S] cluster: Cys12, Cys49, Cys82, Cys156, Cys160, and Cys163. Residues 142–374 (RAEGPTAFVS…QETINANARR (233 aa)) form the Radical SAM core domain. In terms of domain architecture, TRAM spans 377–440 (ESMVGTVQRV…PNSLRGELLG (64 aa)).

The protein belongs to the methylthiotransferase family. MiaB subfamily. In terms of assembly, monomer. [4Fe-4S] cluster serves as cofactor.

The protein resides in the cytoplasm. It catalyses the reaction N(6)-dimethylallyladenosine(37) in tRNA + (sulfur carrier)-SH + AH2 + 2 S-adenosyl-L-methionine = 2-methylsulfanyl-N(6)-dimethylallyladenosine(37) in tRNA + (sulfur carrier)-H + 5'-deoxyadenosine + L-methionine + A + S-adenosyl-L-homocysteine + 2 H(+). Functionally, catalyzes the methylthiolation of N6-(dimethylallyl)adenosine (i(6)A), leading to the formation of 2-methylthio-N6-(dimethylallyl)adenosine (ms(2)i(6)A) at position 37 in tRNAs that read codons beginning with uridine. This is tRNA-2-methylthio-N(6)-dimethylallyladenosine synthase from Alkalilimnicola ehrlichii (strain ATCC BAA-1101 / DSM 17681 / MLHE-1).